The primary structure comprises 468 residues: Pentatricopeptide repeat-containing protein At5g46680 (468 aa).

PPR repeat units lie at residues 12 to 46, 47 to 81, 82 to 116, 117 to 152, 153 to 183, 187 to 221, 222 to 256, 257 to 291, 293 to 327, 328 to 362, 363 to 393, and 394 to 428; these read STKL…GVLP, DVIT…GIEP, DVTT…GLSP, DMWS…GLVP, GIDT…LKSR, ELMT…GYTP, NAVT…GYTF, DGFA…GTRS, DIVS…GLKP, DDYT…GMQP, SVVT…MEVR, and DEFT…GMKI.

Belongs to the PPR family. P subfamily.

This Arabidopsis thaliana (Mouse-ear cress) protein is Pentatricopeptide repeat-containing protein At5g46680.